The chain runs to 545 residues: Cryptochrome-1 (545 aa).

Positions 3 to 138 (VNNILWFRHG…KCVEKVSHTL (136 aa)) constitute a Photolyase/cryptochrome alpha/beta domain. FAD is bound by residues Arg236, Ser264, Ser266, Gln307, His374, 406–408 (DAD), Cys412, and Asn415.

It belongs to the DNA photolyase class-1 family. As to quaternary structure, interacts with tim and per; promoted by light conditions. Requires FAD as cofactor.

It is found in the cytoplasm. It localises to the perinuclear region. Its subcellular location is the nucleus. In terms of biological role, blue light-dependent regulator that is the input of the circadian feedback loop. Has no photolyase activity for cyclobutane pyrimidine dimers or 6-4 photoproducts. Regulation of expression by light suggests a role in photoreception for locomotor activity rhythms. Functions, together with per, as a transcriptional repressor required for the oscillation of peripheral circadian clocks and for the correct specification of clock cells. Genes directly activated by the transcription factors Clock (Clk) and cycle (cyc) are repressed by cry. This chain is Cryptochrome-1, found in Aedes aegypti (Yellowfever mosquito).